Consider the following 419-residue polypeptide: Putative zinc metalloprotease SP_0263 (419 aa).

Position 18 (His-18) interacts with Zn(2+). Glu-19 is a catalytic residue. His-22 provides a ligand contact to Zn(2+). 3 helical membrane-spanning segments follow: residues 169–191 (LITN…WVLI), 345–367 (ILYF…IPAL), and 388–410 (EIET…AVTW).

It belongs to the peptidase M50B family. It depends on Zn(2+) as a cofactor.

It localises to the cell membrane. The chain is Putative zinc metalloprotease SP_0263 from Streptococcus pneumoniae serotype 4 (strain ATCC BAA-334 / TIGR4).